Here is a 551-residue protein sequence, read N- to C-terminus: Chaperonin GroEL (551 aa).

Residues 30–33, Lys-51, 87–91, Gly-415, 479–481, and Asp-495 each bind ATP; these read TLGP, DGTTT, and NAA.

This sequence belongs to the chaperonin (HSP60) family. As to quaternary structure, forms a cylinder of 14 subunits composed of two heptameric rings stacked back-to-back. Interacts with the co-chaperonin GroES.

It localises to the cytoplasm. The enzyme catalyses ATP + H2O + a folded polypeptide = ADP + phosphate + an unfolded polypeptide.. In terms of biological role, together with its co-chaperonin GroES, plays an essential role in assisting protein folding. The GroEL-GroES system forms a nano-cage that allows encapsulation of the non-native substrate proteins and provides a physical environment optimized to promote and accelerate protein folding. This chain is Chaperonin GroEL, found in Acidithiobacillus ferrooxidans (strain ATCC 23270 / DSM 14882 / CIP 104768 / NCIMB 8455) (Ferrobacillus ferrooxidans (strain ATCC 23270)).